The primary structure comprises 532 residues: UDP-N-acetylmuramyl-tripeptide synthetase (532 aa).

Position 34 (Ser34) interacts with UDP-N-acetyl-alpha-D-muramoyl-L-alanyl-D-glutamate. 127–133 (GTEGKSS) is an ATP binding site. UDP-N-acetyl-alpha-D-muramoyl-L-alanyl-D-glutamate is bound by residues 171-172 (TT), Ser198, and Arg208. Residue Lys240 is modified to N6-carboxylysine.

This sequence belongs to the MurCDEF family. MurE subfamily. In terms of processing, carboxylation is probably crucial for Mg(2+) binding and, consequently, for the gamma-phosphate positioning of ATP.

It is found in the cytoplasm. It functions in the pathway cell wall biogenesis; peptidoglycan biosynthesis. Functionally, catalyzes the addition of an amino acid to the nucleotide precursor UDP-N-acetylmuramoyl-L-alanyl-D-glutamate (UMAG) in the biosynthesis of bacterial cell-wall peptidoglycan. This is UDP-N-acetylmuramyl-tripeptide synthetase from Treponema denticola (strain ATCC 35405 / DSM 14222 / CIP 103919 / JCM 8153 / KCTC 15104).